The following is a 380-amino-acid chain: Tryptophan 2,3-dioxygenase (380 aa).

Substrate is bound by residues 57-61 (FIITH) and arginine 128. Heme is bound at residue histidine 313. Threonine 328 is a binding site for substrate.

It belongs to the tryptophan 2,3-dioxygenase family. Homotetramer. Dimer of dimers. Requires heme as cofactor.

The catalysed reaction is L-tryptophan + O2 = N-formyl-L-kynurenine. Its pathway is amino-acid degradation; L-tryptophan degradation via kynurenine pathway; L-kynurenine from L-tryptophan: step 1/2. It participates in pigment biosynthesis; ommochrome biosynthesis. Functionally, heme-dependent dioxygenase that catalyzes the oxidative cleavage of the L-tryptophan (L-Trp) pyrrole ring and converts L-tryptophan to N-formyl-L-kynurenine. Catalyzes the oxidative cleavage of the indole moiety. This Drosophila virilis (Fruit fly) protein is Tryptophan 2,3-dioxygenase.